A 364-amino-acid polypeptide reads, in one-letter code: Aminomethyltransferase (364 aa).

It belongs to the GcvT family. In terms of assembly, the glycine cleavage system is composed of four proteins: P, T, L and H.

The enzyme catalyses N(6)-[(R)-S(8)-aminomethyldihydrolipoyl]-L-lysyl-[protein] + (6S)-5,6,7,8-tetrahydrofolate = N(6)-[(R)-dihydrolipoyl]-L-lysyl-[protein] + (6R)-5,10-methylene-5,6,7,8-tetrahydrofolate + NH4(+). The glycine cleavage system catalyzes the degradation of glycine. The chain is Aminomethyltransferase from Shewanella halifaxensis (strain HAW-EB4).